Reading from the N-terminus, the 211-residue chain is SOSS complex subunit B1 (211 aa).

Positions 22–92 form a DNA-binding region, OB; it reads IVLETGRVTK…TLYTGRGGDL (71 aa). Residues 110–211 are disordered; sequence EPNPEYSAQQ…GKETRRSSKR (102 aa). The span at 115–128 shows a compositional bias: polar residues; that stretch reads YSAQQAPNKTVQND. Pro residues-rich tracts occupy residues 133–143 and 165–174; these read APQPPTGPPAT and PHPPHTPSHP.

It belongs to the SOSS-B family. SOSS-B1 subfamily. As to quaternary structure, component of the SOSS complex, composed of SOSS-B (SOSS-B1/NABP2 or SOSS-B2/NABP1), SOSS-A/INTS3 and SOSS-C/INIP. SOSS complexes containing SOSS-B1/NABP2 are more abundant than complexes containing SOSS-B2/NABP1. Directly interacts with ATM, SOSS-A/INTS3 and RAD51. Interacts with INTS7. Phosphorylated by ATM in response to DNA damage. Phosphorylation prevents degradation by the proteasome, hence stabilization of the protein and accumulation within cells. Post-translationally, ubiquitinated in a FBXL5-dependent manner, leading to proteasomal degradation.

The protein resides in the nucleus. Component of the SOSS complex, a multiprotein complex that functions downstream of the MRN complex to promote DNA repair and G2/M checkpoint. In the SOSS complex, acts as a sensor of single-stranded DNA that binds to single-stranded DNA, in particular to polypyrimidines. The SOSS complex associates with DNA lesions and influences diverse endpoints in the cellular DNA damage response including cell-cycle checkpoint activation, recombinational repair and maintenance of genomic stability. Required for efficient homologous recombination-dependent repair of double-strand breaks (DSBs) and ATM-dependent signaling pathways. The protein is SOSS complex subunit B1 (NABP2) of Bos taurus (Bovine).